The chain runs to 243 residues: tRNA (guanine-N(1)-)-methyltransferase (243 aa).

Residues glycine 108 and 127 to 132 (LGDFVL) each bind S-adenosyl-L-methionine.

The protein belongs to the RNA methyltransferase TrmD family. Homodimer.

It is found in the cytoplasm. The catalysed reaction is guanosine(37) in tRNA + S-adenosyl-L-methionine = N(1)-methylguanosine(37) in tRNA + S-adenosyl-L-homocysteine + H(+). Its function is as follows. Specifically methylates guanosine-37 in various tRNAs. The chain is tRNA (guanine-N(1)-)-methyltransferase from Streptococcus pyogenes serotype M5 (strain Manfredo).